The chain runs to 2108 residues: Mycocerosic acid synthase-like polyketide synthase (2108 aa).

The signal sequence occupies residues 1–23; it reads MGKERTKTVDRTRVTPVAVIGMG. Cys24 is lipidated: N-palmitoyl cysteine. Cys24 carries S-diacylglycerol cysteine lipidation. The Ketosynthase family 3 (KS3) domain occupies 24–436; that stretch reads CRLPGGIDSP…GTNVHAIVEQ (413 aa). The active-site Acyl-thioester intermediate; for beta-ketoacyl synthase activity is the Cys185. Residues His320 and His356 each act as for beta-ketoacyl synthase activity in the active site. Residues 438–542 form a linker domain (LD) region; it reads PVPAPESGAP…PYPPAVGQDD (105 aa). The interval 543–842 is acyltransferase (AT); it reads RGPVWVFSGQ…AAALAGMRRE (300 aa). The active-site Acyl-ester intermediate; for acyltransferase activity is the Ser634. The segment at 900 to 1184 is dehydratase (DH); sequence NTVAVHPLLG…LAVRGLQLGT (285 aa). An N-terminal hotdog fold region spans residues 905-1025; sequence HPLLGSHVRL…AVLHVVREAD (121 aa). The region spanning 905–1191 is the PKS/mFAS DH domain; sequence HPLLGSHVRL…LGTGASQASE (287 aa). The active-site Proton acceptor; for dehydratase activity is the His938. A C-terminal hotdog fold region spans residues 1044–1191; that stretch reads PHKVDGAEVR…LGTGASQASE (148 aa). Asp1108 acts as the Proton donor; for dehydratase activity in catalysis. The interval 1220–1391 is pseudo beta-ketoacyl reductase (PsiKR); the sequence is AWLLISTCDA…SGEDETAWRN (172 aa). The interval 1419 to 1743 is enoylreductase (ER); that stretch reads AGMRLQIRTP…EHTGKLILDV (325 aa). Positions 1765–2004 are beta-ketoacyl reductase (KR); sequence GSYIITGGLG…HSPFAEKFQS (240 aa). Residues 1773–1776, 1796–1799, 1824–1825, and 1897–1898 each bind NADP(+); these read LGGL, SRSQ, DI, and FS. A Carrier domain is found at 2025-2101; it reads EEWPDRLRRL…DLMCDKLAAD (77 aa). The residue at position 2060 (Ser2060) is an O-(pantetheine 4'-phosphoryl)serine.

In terms of assembly, homodimer.

Its subcellular location is the cell membrane. Its pathway is lipid metabolism; fatty acid biosynthesis. Its function is as follows. Polyketide synthase likely involved in the biosynthesis of a polymethyl-branched fatty acid (PMB-FA) that might only be produced during host infection. Is required for the full virulence of M.tuberculosis during host infection. This Mycobacterium tuberculosis (strain ATCC 25618 / H37Rv) protein is Mycocerosic acid synthase-like polyketide synthase.